Reading from the N-terminus, the 327-residue chain is GPI-linked NAD(P)(+)--arginine ADP-ribosyltransferase 1 (327 aa).

The first 22 residues, 1–22 (MWVPAVANLLLLSLGLLEAIQA), serve as a signal peptide directing secretion. 2 cysteine pairs are disulfide-bonded: cysteine 53/cysteine 277 and cysteine 174/cysteine 224. Asparagine 65 carries N-linked (GlcNAc...) asparagine glycosylation. A TR mART core domain is found at 73 to 273 (KVYADGWALA…IYLKALGKRS (201 aa)). NAD(+) is bound by residues tyrosine 121 and arginine 179. Catalysis depends on residues arginine 179 and serine 202. Residue serine 233 coordinates NAD(+). The active site involves glutamate 240. N-linked (GlcNAc...) asparagine glycosylation is present at asparagine 253. A lipid anchor (GPI-anchor amidated serine) is attached at serine 295. Residues 296–327 (ASAQERLSTAWSLLLLLAFLAVGPFPGSPGLF) constitute a propeptide, removed in mature form.

The protein belongs to the Arg-specific ADP-ribosyltransferase family. As to expression, primarily in skeletal and cardiac muscle.

The protein localises to the sarcoplasmic reticulum membrane. The catalysed reaction is L-arginyl-[protein] + NAD(+) = N(omega)-(ADP-D-ribosyl)-L-arginyl-[protein] + nicotinamide + H(+). Functionally, has ADP-ribosyltransferase activity toward GLP1R. The protein is GPI-linked NAD(P)(+)--arginine ADP-ribosyltransferase 1 (ART1) of Oryctolagus cuniculus (Rabbit).